Here is a 353-residue protein sequence, read N- to C-terminus: MEAKKVTEEEEETWRREIVTSVMRLVSTRLPQTDLISLLLVSPWLYRTLISYPSIWLTINLREMTNAGDRLLAALSLPRYRQVKHINLEFAQGVVDSHLKLVKTECPDALLSLEWLNLNVCQKISDNGIEAITSICPKLKVFSIYWNVRVTDAGIRNLVKNCRHITDLNLSGCKSLTDKSMQLVAESYPDLESLNITRCVKITDDGLLQVLQKCFSLQTLNLYALSGFTDKAYMKISLLADLRFLDICGAQNISDEGIGHIAKCNKLESLNLTWCVRITDAGVNTIANSCTSLEFLSLFGIVGVTDRCLETLSQTCSTTLTTLDVNGCTGIKRRSREELLQMFPRLTCFKVHS.

The 49-residue stretch at 8 to 56 (EEEEETWRREIVTSVMRLVSTRLPQTDLISLLLVSPWLYRTLISYPSIW) folds into the F-box; degenerate domain.

This chain is F-box protein At3g58530, found in Arabidopsis thaliana (Mouse-ear cress).